The chain runs to 163 residues: Small ribosomal subunit protein uS9 (163 aa).

The segment at 1-41 is disordered; that stretch reads MAENTNDSAVLETEEELTSYTTETNAGAGTGTSTIAPGYGT. The span at 18-38 shows a compositional bias: low complexity; sequence TSYTTETNAGAGTGTSTIAPG.

The protein belongs to the universal ribosomal protein uS9 family.

The protein is Small ribosomal subunit protein uS9 of Bifidobacterium adolescentis (strain ATCC 15703 / DSM 20083 / NCTC 11814 / E194a).